A 370-amino-acid polypeptide reads, in one-letter code: Maturase K (370 aa).

The protein belongs to the intron maturase 2 family. MatK subfamily.

Its subcellular location is the plastid. The protein localises to the chloroplast. Usually encoded in the trnK tRNA gene intron. Probably assists in splicing its own and other chloroplast group II introns. In Marchantia polymorpha (Common liverwort), this protein is Maturase K.